A 350-amino-acid chain; its full sequence is Kievitone hydratase (350 aa).

The N-terminal stretch at 1–19 (MMISSVLVAGVVAVSAALA) is a signal peptide.

In terms of assembly, homodimer. Glycosylated.

It localises to the secreted. It carries out the reaction kievitone hydrate = kievitone + H2O. Converts fungitoxic kievitone to the less toxic kievitone hydrate, and thereby protects the pathogenic fungus against this phytoalexin. The polypeptide is Kievitone hydratase (khs) (Fusarium solani subsp. phaseoli (Nectria haematococca)).